The sequence spans 161 residues: Transcriptional repressor NrdR (161 aa).

Positions 1-11 are enriched in polar residues; the sequence is MRCPSCNSLDT. A disordered region spans residues 1-20; that stretch reads MRCPSCNSLDTQVKDSRPTE. The segment at 3–34 is a zinc-finger region; the sequence is CPSCNSLDTQVKDSRPTEDSSVIRRRRVCVTC. In terms of domain architecture, ATP-cone spans 49–139; sequence LTVIKRNGRR…VYRNFREAKD (91 aa).

This sequence belongs to the NrdR family. Zn(2+) serves as cofactor.

Its function is as follows. Negatively regulates transcription of bacterial ribonucleotide reductase nrd genes and operons by binding to NrdR-boxes. The chain is Transcriptional repressor NrdR from Bradyrhizobium sp. (strain ORS 278).